Consider the following 339-residue polypeptide: tRNA N6-adenosine threonylcarbamoyltransferase (339 aa).

Residues histidine 107 and histidine 111 each coordinate Fe cation. Substrate-binding positions include 129-133, aspartate 162, glycine 175, and asparagine 279; that span reads LVSGG. Aspartate 307 lines the Fe cation pocket.

The protein belongs to the KAE1 / TsaD family. It depends on Fe(2+) as a cofactor.

The protein localises to the cytoplasm. It carries out the reaction L-threonylcarbamoyladenylate + adenosine(37) in tRNA = N(6)-L-threonylcarbamoyladenosine(37) in tRNA + AMP + H(+). Its function is as follows. Required for the formation of a threonylcarbamoyl group on adenosine at position 37 (t(6)A37) in tRNAs that read codons beginning with adenine. Is involved in the transfer of the threonylcarbamoyl moiety of threonylcarbamoyl-AMP (TC-AMP) to the N6 group of A37, together with TsaE and TsaB. TsaD likely plays a direct catalytic role in this reaction. The protein is tRNA N6-adenosine threonylcarbamoyltransferase of Campylobacter curvus (strain 525.92).